Reading from the N-terminus, the 146-residue chain is Acidic phospholipase A2 2 (146 aa).

The N-terminal stretch at 1 to 21 (MTPAHLLILAAVCVSPLGASS) is a signal peptide. The propeptide occupies 22-27 (SRPMPL). 7 disulfides stabilise this stretch: Cys-38/Cys-98, Cys-53/Cys-145, Cys-55/Cys-71, Cys-70/Cys-126, Cys-77/Cys-119, Cys-87/Cys-112, and Cys-105/Cys-117. Ca(2+) is bound by residues Tyr-54, Gly-56, and Gly-58. Residue His-74 is part of the active site. Asp-75 is a Ca(2+) binding site. Asp-120 is an active-site residue.

It belongs to the phospholipase A2 family. Group I subfamily. D49 sub-subfamily. It depends on Ca(2+) as a cofactor. As to expression, expressed by the venom gland.

The protein resides in the secreted. It catalyses the reaction a 1,2-diacyl-sn-glycero-3-phosphocholine + H2O = a 1-acyl-sn-glycero-3-phosphocholine + a fatty acid + H(+). Its function is as follows. PLA2 catalyzes the calcium-dependent hydrolysis of the 2-acyl groups in 3-sn-phosphoglycerides. The sequence is that of Acidic phospholipase A2 2 from Naja atra (Chinese cobra).